Consider the following 161-residue polypeptide: Tropomyosin (161 aa).

A coiled-coil region spans residues 1–161 (MDKLREKINA…DEVHQALEDL (161 aa)). Basic and acidic residues predominate over residues 40–52 (EQEYESLSRKSEA). Disordered regions lie at residues 40-65 (EQEY…EETK) and 107-134 (EKMR…DDME).

In terms of assembly, homodimer.

It localises to the cytoplasm. It is found in the cytoskeleton. Forms part of the F-actin contractile ring during cytokinesis. This Schizosaccharomyces pombe (strain 972 / ATCC 24843) (Fission yeast) protein is Tropomyosin (cdc8).